We begin with the raw amino-acid sequence, 332 residues long: NH(3)-dependent NAD(+) synthetase (332 aa).

Gly-48–Ser-55 contributes to the ATP binding site. Residue Asp-54 participates in Mg(2+) binding. Arg-184 is a binding site for deamido-NAD(+). An ATP-binding site is contributed by Thr-204. Glu-209 provides a ligand contact to Mg(2+). 2 residues coordinate deamido-NAD(+): Lys-217 and Asp-224. The ATP site is built by Lys-233 and Thr-255.

The protein belongs to the NAD synthetase family. Homodimer.

It carries out the reaction deamido-NAD(+) + NH4(+) + ATP = AMP + diphosphate + NAD(+) + H(+). Its pathway is cofactor biosynthesis; NAD(+) biosynthesis; NAD(+) from deamido-NAD(+) (ammonia route): step 1/1. In terms of biological role, catalyzes the ATP-dependent amidation of deamido-NAD to form NAD. Uses ammonia as a nitrogen source. The polypeptide is NH(3)-dependent NAD(+) synthetase (Rhizobium rhizogenes (strain K84 / ATCC BAA-868) (Agrobacterium radiobacter)).